Reading from the N-terminus, the 497-residue chain is UPF0371 protein DIP2346 (497 aa).

This sequence belongs to the UPF0371 family.

The sequence is that of UPF0371 protein DIP2346 from Corynebacterium diphtheriae (strain ATCC 700971 / NCTC 13129 / Biotype gravis).